Reading from the N-terminus, the 265-residue chain is 3-methyl-2-oxobutanoate hydroxymethyltransferase (265 aa).

Residues Asp-45 and Asp-84 each coordinate Mg(2+). 3-methyl-2-oxobutanoate contacts are provided by residues 45–46, Asp-84, and Lys-112; that span reads DS. Glu-114 is a binding site for Mg(2+). The active-site Proton acceptor is Glu-181.

The protein belongs to the PanB family. As to quaternary structure, homodecamer; pentamer of dimers. The cofactor is Mg(2+).

The protein resides in the cytoplasm. It catalyses the reaction 3-methyl-2-oxobutanoate + (6R)-5,10-methylene-5,6,7,8-tetrahydrofolate + H2O = 2-dehydropantoate + (6S)-5,6,7,8-tetrahydrofolate. Its pathway is cofactor biosynthesis; (R)-pantothenate biosynthesis; (R)-pantoate from 3-methyl-2-oxobutanoate: step 1/2. Catalyzes the reversible reaction in which hydroxymethyl group from 5,10-methylenetetrahydrofolate is transferred onto alpha-ketoisovalerate to form ketopantoate. The sequence is that of 3-methyl-2-oxobutanoate hydroxymethyltransferase from Pectobacterium carotovorum subsp. carotovorum (strain PC1).